A 310-amino-acid chain; its full sequence is p-hydroxybenzoic acid efflux pump subunit AaeA (310 aa).

The helical transmembrane segment at 12–32 (AITVVLVVLAFIAIFRAWSFY) threads the bilayer.

This sequence belongs to the membrane fusion protein (MFP) (TC 8.A.1) family.

Its subcellular location is the cell inner membrane. Forms an efflux pump with AaeB. The sequence is that of p-hydroxybenzoic acid efflux pump subunit AaeA from Cronobacter sakazakii (strain ATCC BAA-894) (Enterobacter sakazakii).